Here is a 1021-residue protein sequence, read N- to C-terminus: Contactin-1 (1021 aa).

The N-terminal stretch at methionine 1–glycine 20 is a signal peptide. Ig-like C2-type domains follow at residues proline 41–serine 131, proline 137–phenylalanine 223, proline 241–tyrosine 326, proline 331–lysine 407, proline 413–valine 500, and proline 504–arginine 603. Cystine bridges form between cysteine 65–cysteine 114 and cysteine 158–cysteine 211. N-linked (GlcNAc...) asparagine glycans are attached at residues asparagine 208 and asparagine 258. Cysteine 263 and cysteine 310 form a disulfide bridge. Asparagine 338 carries N-linked (GlcNAc...) asparagine glycosylation. Cystine bridges form between cysteine 352/cysteine 391 and cysteine 436/cysteine 484. 4 N-linked (GlcNAc...) asparagine glycosylation sites follow: asparagine 457, asparagine 473, asparagine 494, and asparagine 521. Cysteine 526 and cysteine 585 are oxidised to a cystine. Asparagine 593 carries an N-linked (GlcNAc...) asparagine glycan. 4 Fibronectin type-III domains span residues proline 608–alanine 706, alanine 711–aspartate 808, alanine 813–serine 908, and glutamine 909–serine 1002. The segment at serine 695–glycine 719 is disordered. The N-linked (GlcNAc...) asparagine glycan is linked to asparagine 935. Serine 1001 carries the GPI-anchor amidated serine lipid modification. A propeptide spans serine 1002–phenylalanine 1021 (removed in mature form).

The protein belongs to the immunoglobulin superfamily. Contactin family. Monomer. Interacts with NOTCH1. Interacts with CNTNAP1 in cis form and TNR. Binds to the carbonic-anhydrase like domain of PTPRZ1. Detected in a complex with NRCAM and PTPRB. Interacts with TASOR. In terms of tissue distribution, expressed by neurons, oligodendrocytes and their progenitors (at protein level). Myelination regulates the expression being down-regulated when neurons are in contact with Schwann cells.

Its subcellular location is the cell membrane. Its function is as follows. Contactins mediate cell surface interactions during nervous system development. Involved in the formation of paranodal axo-glial junctions in myelinated peripheral nerves and in the signaling between axons and myelinating glial cells via its association with CNTNAP1. Participates in oligodendrocytes generation by acting as a ligand of NOTCH1. Its association with NOTCH1 promotes NOTCH1 activation through the released notch intracellular domain (NICD) and subsequent translocation to the nucleus. Interaction with TNR induces a repulsion of neurons and an inhibition of neurite outgrowth. The sequence is that of Contactin-1 (Cntn1) from Rattus norvegicus (Rat).